Consider the following 139-residue polypeptide: Glutamate mutase sigma subunit (139 aa).

The region spanning lysine 4–alanine 139 is the B12-binding domain. Adenosylcob(III)alamin contacts are provided by residues serine 14 to alanine 18, histidine 17, serine 62 to leucine 64, and asparagine 94 to glycine 98.

This sequence belongs to the methylaspartate mutase GlmS subunit family. In terms of assembly, heterotetramer composed of 2 epsilon subunits (GlmE) and 2 sigma subunits (GlmS). GlmE exists as a homodimer and GlmS as a monomer. It depends on adenosylcob(III)alamin as a cofactor.

It carries out the reaction (2S,3S)-3-methyl-L-aspartate = L-glutamate. The protein operates within amino-acid degradation; L-glutamate degradation via mesaconate pathway; acetate and pyruvate from L-glutamate: step 1/4. Its function is as follows. Catalyzes the carbon skeleton rearrangement of L-glutamate to L-threo-3-methylaspartate ((2S,3S)-3-methylaspartate). The sequence is that of Glutamate mutase sigma subunit from Treponema denticola (strain ATCC 35405 / DSM 14222 / CIP 103919 / JCM 8153 / KCTC 15104).